Consider the following 210-residue polypeptide: Protein GrpE (210 aa).

The protein belongs to the GrpE family. In terms of assembly, homodimer.

Its subcellular location is the cytoplasm. In terms of biological role, participates actively in the response to hyperosmotic and heat shock by preventing the aggregation of stress-denatured proteins, in association with DnaK and GrpE. It is the nucleotide exchange factor for DnaK and may function as a thermosensor. Unfolded proteins bind initially to DnaJ; upon interaction with the DnaJ-bound protein, DnaK hydrolyzes its bound ATP, resulting in the formation of a stable complex. GrpE releases ADP from DnaK; ATP binding to DnaK triggers the release of the substrate protein, thus completing the reaction cycle. Several rounds of ATP-dependent interactions between DnaJ, DnaK and GrpE are required for fully efficient folding. The polypeptide is Protein GrpE (Rhizobium leguminosarum bv. trifolii (strain WSM2304)).